Consider the following 1331-residue polypeptide: Serine/threonine-protein kinase SSK22 (1331 aa).

Residues 1034–1310 (WQKRSFIGGG…AVELLIDPWM (277 aa)) enclose the Protein kinase domain. ATP-binding positions include 1040 to 1048 (IGGGTFGQV) and Lys1063. Asp1158 acts as the Proton acceptor in catalysis.

The protein belongs to the protein kinase superfamily. STE Ser/Thr protein kinase family. MAP kinase kinase kinase subfamily. Interacts with by SSK1.

The enzyme catalyses L-seryl-[protein] + ATP = O-phospho-L-seryl-[protein] + ADP + H(+). The catalysed reaction is L-threonyl-[protein] + ATP = O-phospho-L-threonyl-[protein] + ADP + H(+). Its function is as follows. Kinase involved in a signal transduction pathway that is activated by changes in the osmolarity of the extracellular environment. Activates the PBS2 MAP kinase kinase by phosphorylation. In Saccharomyces cerevisiae (strain ATCC 204508 / S288c) (Baker's yeast), this protein is Serine/threonine-protein kinase SSK22 (SSK22).